Here is a 76-residue protein sequence, read N- to C-terminus: Small proline-rich protein 4 (76 aa).

The disordered stretch occupies residues 38-76 (PKTKDPCVPQAKKQCPARSTTNPAQEKCPAQQDPKCKQK).

It belongs to the cornifin (SPRR) family. In terms of processing, cross-linked to membrane proteins by transglutaminase.

The protein localises to the cytoplasm. The protein resides in the cell cortex. Functionally, cross-linked envelope protein of keratinocytes. Involved in UV-induced cornification. In Mus musculus (Mouse), this protein is Small proline-rich protein 4 (Sprr4).